Here is a 377-residue protein sequence, read N- to C-terminus: Aspartate aminotransferase (377 aa).

Positions 37, 123, and 173 each coordinate L-aspartate. K234 bears the N6-(pyridoxal phosphate)lysine mark. R353 provides a ligand contact to L-aspartate.

The protein belongs to the class-I pyridoxal-phosphate-dependent aminotransferase family. Homodimer. Pyridoxal 5'-phosphate serves as cofactor.

Its subcellular location is the cytoplasm. It catalyses the reaction L-aspartate + 2-oxoglutarate = oxaloacetate + L-glutamate. This chain is Aspartate aminotransferase (aspC), found in Thermotoga maritima (strain ATCC 43589 / DSM 3109 / JCM 10099 / NBRC 100826 / MSB8).